The chain runs to 278 residues: Elongation factor Ts (278 aa).

The segment at 80–83 (TDFV) is involved in Mg(2+) ion dislocation from EF-Tu.

It belongs to the EF-Ts family.

It localises to the cytoplasm. Functionally, associates with the EF-Tu.GDP complex and induces the exchange of GDP to GTP. It remains bound to the aminoacyl-tRNA.EF-Tu.GTP complex up to the GTP hydrolysis stage on the ribosome. The protein is Elongation factor Ts of Micrococcus luteus (strain ATCC 4698 / DSM 20030 / JCM 1464 / CCM 169 / CCUG 5858 / IAM 1056 / NBRC 3333 / NCIMB 9278 / NCTC 2665 / VKM Ac-2230) (Micrococcus lysodeikticus).